Consider the following 290-residue polypeptide: MPSLKDLKNRIVSVKNTRKITKAMQMVAAANIRRAQESAEAARPYAERMNAVMSSLAGAVGSTDGAPRLLAGTGSDKVHLLVIMTGERGLCGGFNANIAKLAKAKAMELLAQGKTVKILTVGKKGRDALRRDLGQYYIDHIDLSDVKKLSYPVAQKISQNIIDRFEAGEYDVATIFFSVFQSVISQVPTAKQVIPAQFETDAASASAVYDYEPGDQEILTALLPRAVATAIFAALLENNASFNGAQMSAMDNATRNAGDMIDRLTIEYNRSRQAAITKELIEIISGAEAL.

Belongs to the ATPase gamma chain family. As to quaternary structure, F-type ATPases have 2 components, CF(1) - the catalytic core - and CF(0) - the membrane proton channel. CF(1) has five subunits: alpha(3), beta(3), gamma(1), delta(1), epsilon(1). CF(0) has four main subunits: a, b, b' and c.

The protein localises to the cellular chromatophore membrane. Produces ATP from ADP in the presence of a proton gradient across the membrane. The gamma chain is believed to be important in regulating ATPase activity and the flow of protons through the CF(0) complex. The chain is ATP synthase gamma chain from Rhodobacter capsulatus (Rhodopseudomonas capsulata).